A 288-amino-acid chain; its full sequence is Probable endonuclease 4 (288 aa).

Zn(2+) contacts are provided by His75, His115, Glu153, Asp187, His190, His224, Asp237, His239, and Glu269.

It belongs to the AP endonuclease 2 family. Zn(2+) is required as a cofactor.

The enzyme catalyses Endonucleolytic cleavage to 5'-phosphooligonucleotide end-products.. In terms of biological role, endonuclease IV plays a role in DNA repair. It cleaves phosphodiester bonds at apurinic or apyrimidinic (AP) sites, generating a 3'-hydroxyl group and a 5'-terminal sugar phosphate. This Chlamydia muridarum (strain MoPn / Nigg) protein is Probable endonuclease 4.